An 873-amino-acid polypeptide reads, in one-letter code: Probable beta-glucosidase A (873 aa).

Residues 1–19 (MRFGWLEVAALTAASVANA) form the signal peptide. N-linked (GlcNAc...) asparagine glycosylation is found at asparagine 71, asparagine 222, and asparagine 263. The active site involves aspartate 291. 9 N-linked (GlcNAc...) asparagine glycosylation sites follow: asparagine 326, asparagine 333, asparagine 365, asparagine 453, asparagine 534, asparagine 553, asparagine 575, asparagine 679, and asparagine 725. The segment at 731–764 (DSSDDPNYGWEDSEYIPEGARDGSPQPLLKAGGA) is disordered.

Belongs to the glycosyl hydrolase 3 family.

It is found in the secreted. It carries out the reaction Hydrolysis of terminal, non-reducing beta-D-glucosyl residues with release of beta-D-glucose.. It functions in the pathway glycan metabolism; cellulose degradation. Beta-glucosidases are one of a number of cellulolytic enzymes involved in the degradation of cellulosic biomass. Catalyzes the last step releasing glucose from the inhibitory cellobiose. In Aspergillus fumigatus (strain CBS 144.89 / FGSC A1163 / CEA10) (Neosartorya fumigata), this protein is Probable beta-glucosidase A (bglA).